We begin with the raw amino-acid sequence, 102 residues long: Small integral membrane protein 29 (102 aa).

N3 is a glycosylation site (N-linked (GlcNAc...) asparagine). Residues 21 to 41 traverse the membrane as a helical segment; it reads VLGPFFLITLVGVVVAVVMYV.

The protein resides in the membrane. The sequence is that of Small integral membrane protein 29 from Mus musculus (Mouse).